The chain runs to 243 residues: DNA repair protein RecO (243 aa).

The protein belongs to the RecO family.

Its function is as follows. Involved in DNA repair and RecF pathway recombination. This is DNA repair protein RecO from Caulobacter vibrioides (strain NA1000 / CB15N) (Caulobacter crescentus).